We begin with the raw amino-acid sequence, 371 residues long: Cytochrome b (371 aa).

The next 4 helical transmembrane spans lie at Phe-25–Val-45, Trp-69–Ile-90, Trp-105–Leu-125, and Phe-170–Ile-190. Heme b-binding residues include His-75 and His-89. Heme b is bound by residues His-174 and His-188. Residue His-193 participates in a ubiquinone binding. The next 4 membrane-spanning stretches (helical) occupy residues Tyr-218–Phe-238, Leu-280–His-300, Leu-312–Thr-332, and Phe-339–Pro-358.

It belongs to the cytochrome b family. The cytochrome bc1 complex contains 3 respiratory subunits (MT-CYB, CYC1 and UQCRFS1), 2 core proteins (UQCRC1 and UQCRC2) and probably 6 low-molecular weight proteins. Heme b serves as cofactor.

It is found in the mitochondrion inner membrane. Component of the ubiquinol-cytochrome c reductase complex (complex III or cytochrome b-c1 complex) that is part of the mitochondrial respiratory chain. The b-c1 complex mediates electron transfer from ubiquinol to cytochrome c. Contributes to the generation of a proton gradient across the mitochondrial membrane that is then used for ATP synthesis. The chain is Cytochrome b (MT-CYB) from Python sebae (African rock python).